Reading from the N-terminus, the 130-residue chain is Large ribosomal subunit protein uL22 (130 aa).

Belongs to the universal ribosomal protein uL22 family. In terms of assembly, part of the 50S ribosomal subunit.

In terms of biological role, this protein binds specifically to 23S rRNA; its binding is stimulated by other ribosomal proteins, e.g. L4, L17, and L20. It is important during the early stages of 50S assembly. It makes multiple contacts with different domains of the 23S rRNA in the assembled 50S subunit and ribosome. Functionally, the globular domain of the protein is located near the polypeptide exit tunnel on the outside of the subunit, while an extended beta-hairpin is found that lines the wall of the exit tunnel in the center of the 70S ribosome. The polypeptide is Large ribosomal subunit protein uL22 (Clavibacter sepedonicus (Clavibacter michiganensis subsp. sepedonicus)).